The following is a 162-amino-acid chain: Probable chemoreceptor glutamine deamidase CheD (162 aa).

It belongs to the CheD family.

It catalyses the reaction L-glutaminyl-[protein] + H2O = L-glutamyl-[protein] + NH4(+). Its function is as follows. Probably deamidates glutamine residues to glutamate on methyl-accepting chemotaxis receptors (MCPs), playing an important role in chemotaxis. This Clostridium botulinum (strain Alaska E43 / Type E3) protein is Probable chemoreceptor glutamine deamidase CheD.